Consider the following 173-residue polypeptide: Zinc finger matrin-type protein 5 (173 aa).

The segment at 51-79 (ERSKEVCRKFVQTGQCVFGTSCRFSHMSE) adopts a C3H1-type zinc-finger fold. The disordered stretch occupies residues 83–111 (KMLEQKIDDEKRQKEDPDQDGSSERSVDE).

Component of the U11/U12 snRNPs that are part of the U12-type spliceosome.

Its subcellular location is the nucleus. The chain is Zinc finger matrin-type protein 5 (zmat5) from Danio rerio (Zebrafish).